A 572-amino-acid chain; its full sequence is Flagellin A (572 aa).

This sequence belongs to the bacterial flagellin family. In terms of assembly, heteromer of FlaA and FlaB. Interacts with FliW.

It localises to the secreted. The protein localises to the bacterial flagellum. Its function is as follows. Flagellin is the subunit protein which polymerizes to form the filaments of bacterial flagella. FlaA binds to flagellar assembly factor FliW protein, preventing FliW from binding to CsrA, so that CsrA can then bind flaA mRNA and represses its translation. This Campylobacter jejuni subsp. jejuni serotype O:2 (strain ATCC 700819 / NCTC 11168) protein is Flagellin A (flaA).